The chain runs to 184 residues: Two-component response regulator ARR5 (184 aa).

Positions 26–154 constitute a Response regulatory domain; it reads HVLAVDDSMV…DVKRLRDSLM (129 aa). 4-aspartylphosphate is present on D87.

This sequence belongs to the ARR family. Type-A subfamily. Post-translationally, two-component system major event consists of a His-to-Asp phosphorelay between a sensor histidine kinase (HK) and a response regulator (RR). In plants, the His-to-Asp phosphorelay involves an additional intermediate named Histidine-containing phosphotransfer protein (HPt). This multistep phosphorelay consists of a His-Asp-His-Asp sequential transfer of a phosphate group between first a His and an Asp of the HK protein, followed by the transfer to a conserved His of the HPt protein and finally the transfer to an Asp in the receiver domain of the RR protein. In terms of tissue distribution, predominantly expressed in roots and shoot apical meristems.

The protein resides in the nucleus. Its function is as follows. Functions as a response regulator involved in His-to-Asp phosphorelay signal transduction system. Phosphorylation of the Asp residue in the receiver domain activates the ability of the protein to promote the transcription of target genes. Type-A response regulators seem to act as negative regulators of the cytokinin signaling. In Arabidopsis thaliana (Mouse-ear cress), this protein is Two-component response regulator ARR5 (ARR5).